Consider the following 505-residue polypeptide: Glutamate--tRNA ligase (505 aa).

Residues Pro12–Thr22 carry the 'HIGH' region motif. Positions Lys253–Arg257 match the 'KMSKS' region motif. Lys256 is a binding site for ATP.

It belongs to the class-I aminoacyl-tRNA synthetase family. Glutamate--tRNA ligase type 1 subfamily. Monomer.

The protein resides in the cytoplasm. The enzyme catalyses tRNA(Glu) + L-glutamate + ATP = L-glutamyl-tRNA(Glu) + AMP + diphosphate. Functionally, catalyzes the attachment of glutamate to tRNA(Glu) in a two-step reaction: glutamate is first activated by ATP to form Glu-AMP and then transferred to the acceptor end of tRNA(Glu). The protein is Glutamate--tRNA ligase of Chlamydia pneumoniae (Chlamydophila pneumoniae).